A 126-amino-acid chain; its full sequence is Large ribosomal subunit protein bL19 (126 aa).

This sequence belongs to the bacterial ribosomal protein bL19 family.

Its function is as follows. This protein is located at the 30S-50S ribosomal subunit interface and may play a role in the structure and function of the aminoacyl-tRNA binding site. This is Large ribosomal subunit protein bL19 from Gluconacetobacter diazotrophicus (strain ATCC 49037 / DSM 5601 / CCUG 37298 / CIP 103539 / LMG 7603 / PAl5).